A 34-amino-acid chain; its full sequence is Cytochrome b6-f complex subunit 8 (34 aa).

The chain crosses the membrane as a helical span at residues 3 to 23 (IFQIGWAALAAIFTFSIAMVV).

Belongs to the PetN family. As to quaternary structure, the 4 large subunits of the cytochrome b6-f complex are cytochrome b6, subunit IV (17 kDa polypeptide, PetD), cytochrome f and the Rieske protein, while the 4 small subunits are PetG, PetL, PetM and PetN. The complex functions as a dimer.

The protein resides in the cellular thylakoid membrane. In terms of biological role, component of the cytochrome b6-f complex, which mediates electron transfer between photosystem II (PSII) and photosystem I (PSI), cyclic electron flow around PSI, and state transitions. The protein is Cytochrome b6-f complex subunit 8 of Prochlorococcus marinus subsp. pastoris (strain CCMP1986 / NIES-2087 / MED4).